The following is a 160-amino-acid chain: Deoxyuridine 5'-triphosphate nucleotidohydrolase (160 aa).

Substrate-binding positions include 79–81 (RSG), asparagine 92, 96–98 (TVD), and lysine 106.

The protein belongs to the dUTPase family. The cofactor is Mg(2+).

It carries out the reaction dUTP + H2O = dUMP + diphosphate + H(+). The protein operates within pyrimidine metabolism; dUMP biosynthesis; dUMP from dCTP (dUTP route): step 2/2. Its function is as follows. This enzyme is involved in nucleotide metabolism: it produces dUMP, the immediate precursor of thymidine nucleotides and it decreases the intracellular concentration of dUTP so that uracil cannot be incorporated into DNA. The protein is Deoxyuridine 5'-triphosphate nucleotidohydrolase of Sinorhizobium medicae (strain WSM419) (Ensifer medicae).